Consider the following 492-residue polypeptide: Acyl-CoA-binding domain-containing protein 5 (492 aa).

One can recognise an ACB domain in the interval 8–97; it reads HATRFEAAVK…MKKILESMPM (90 aa). Residues 19–28, 39–43, K65, and Y84 contribute to the an acyl-CoA site; these read IQSLPKNGSF and YSFYK. 2 disordered regions span residues 141–162 and 335–399; these read AVNG…GLRE and VKCG…DRGP. Positions 153-162 are enriched in acidic residues; the sequence is AESEEEGLRE. Basic and acidic residues predominate over residues 335 to 360; the sequence is VKCGGEDGKASNGAPHKEKKDGEKAD. Residues 378–388 are compositionally biased toward gly residues; that stretch reads GSQGGQMGNGG. Residues 389 to 399 show a composition bias toward basic and acidic residues; sequence DGERWGSDRGP. Positions 405 to 431 form a coiled coil; the sequence is EQIAVVLMRLQEDMQNVLQRLHMLEAV. Residues 464 to 484 traverse the membrane as a helical segment; sequence GVLAFAIVWPFIAQWLVHVYL.

This sequence belongs to the ATG37 family.

It localises to the peroxisome membrane. Its function is as follows. Acyl-CoA binding protein which acts as the peroxisome receptor for pexophagy but is dispensable for aggrephagy and nonselective autophagy. Binds medium- and long-chain acyl-CoA esters. This Gallus gallus (Chicken) protein is Acyl-CoA-binding domain-containing protein 5 (ACBD5).